Here is a 355-residue protein sequence, read N- to C-terminus: Peptide chain release factor 1 (355 aa).

The residue at position 231 (glutamine 231) is an N5-methylglutamine. Residues 280–291 (SERLAKESEARK) are compositionally biased toward basic and acidic residues. Residues 280–303 (SERLAKESEARKSQVGSGDRSERI) are disordered.

Belongs to the prokaryotic/mitochondrial release factor family. Post-translationally, methylated by PrmC. Methylation increases the termination efficiency of RF1.

The protein localises to the cytoplasm. In terms of biological role, peptide chain release factor 1 directs the termination of translation in response to the peptide chain termination codons UAG and UAA. In Campylobacter jejuni subsp. jejuni serotype O:2 (strain ATCC 700819 / NCTC 11168), this protein is Peptide chain release factor 1.